Consider the following 582-residue polypeptide: Sulfite reductase [NADPH] hemoprotein beta-component (582 aa).

Over residues 1–12 (MDLKVKVDRSRD) the composition is skewed to basic and acidic residues. The disordered stretch occupies residues 1-26 (MDLKVKVDRSRDVSQPLDKLGPDETL). The [4Fe-4S] cluster site is built by Cys-447, Cys-453, Cys-492, and Cys-496. Cys-496 lines the siroheme pocket.

Belongs to the nitrite and sulfite reductase 4Fe-4S domain family. In terms of assembly, alpha(8)-beta(8). The alpha component is a flavoprotein, the beta component is a hemoprotein. The cofactor is siroheme. [4Fe-4S] cluster is required as a cofactor.

It catalyses the reaction hydrogen sulfide + 3 NADP(+) + 3 H2O = sulfite + 3 NADPH + 4 H(+). Its pathway is sulfur metabolism; hydrogen sulfide biosynthesis; hydrogen sulfide from sulfite (NADPH route): step 1/1. Functionally, component of the sulfite reductase complex that catalyzes the 6-electron reduction of sulfite to sulfide. This is one of several activities required for the biosynthesis of L-cysteine from sulfate. This chain is Sulfite reductase [NADPH] hemoprotein beta-component, found in Afipia carboxidovorans (strain ATCC 49405 / DSM 1227 / KCTC 32145 / OM5) (Oligotropha carboxidovorans).